A 779-amino-acid polypeptide reads, in one-letter code: Glutathione biosynthesis bifunctional protein GshAB (779 aa).

Positions 1–346 are glutamate--cysteine ligase; sequence MAFSKNILDS…ETANRNQEQA (346 aa). In terms of domain architecture, ATP-grasp spans 512–768; it reads KKILDQAGIN…LDDKILDALG (257 aa). Position 539–597 (539–597) interacts with ATP; it reads PYYRGRAIVIKPKSTNFGIGITIIKENNRHDFFAQGIAQAFKHEATVLIENFSSGKEYR. 3 residues coordinate Mg(2+): aspartate 719, glutamate 738, and asparagine 740. Aspartate 719, glutamate 738, and asparagine 740 together coordinate Mn(2+).

The protein in the N-terminal section; belongs to the glutamate--cysteine ligase type 1 family. Type 2 subfamily. In terms of assembly, monomer. Mg(2+) serves as cofactor. It depends on Mn(2+) as a cofactor.

It carries out the reaction L-cysteine + L-glutamate + ATP = gamma-L-glutamyl-L-cysteine + ADP + phosphate + H(+). It catalyses the reaction gamma-L-glutamyl-L-cysteine + glycine + ATP = glutathione + ADP + phosphate + H(+). The protein operates within sulfur metabolism; glutathione biosynthesis; glutathione from L-cysteine and L-glutamate: step 1/2. It functions in the pathway sulfur metabolism; glutathione biosynthesis; glutathione from L-cysteine and L-glutamate: step 2/2. Synthesizes glutathione from L-glutamate and L-cysteine via gamma-L-glutamyl-L-cysteine. The protein is Glutathione biosynthesis bifunctional protein GshAB of Desulfotalea psychrophila (strain LSv54 / DSM 12343).